We begin with the raw amino-acid sequence, 212 residues long: Uridine kinase (212 aa).

An ATP-binding site is contributed by 12–19 (GGSGGGKT).

The protein belongs to the uridine kinase family.

It localises to the cytoplasm. It carries out the reaction uridine + ATP = UMP + ADP + H(+). It catalyses the reaction cytidine + ATP = CMP + ADP + H(+). Its pathway is pyrimidine metabolism; CTP biosynthesis via salvage pathway; CTP from cytidine: step 1/3. The protein operates within pyrimidine metabolism; UMP biosynthesis via salvage pathway; UMP from uridine: step 1/1. The protein is Uridine kinase of Streptococcus pneumoniae serotype 19F (strain G54).